Reading from the N-terminus, the 345-residue chain is Biotin synthase (345 aa).

The 226-residue stretch at 66–291 folds into the Radical SAM core domain; sequence PEVEVEGIIS…RTMLRFAGGR (226 aa). [4Fe-4S] cluster-binding residues include Cys-81, Cys-85, and Cys-88. [2Fe-2S] cluster is bound by residues Cys-124, Cys-157, Cys-216, and Arg-286.

This sequence belongs to the radical SAM superfamily. Biotin synthase family. In terms of assembly, homodimer. It depends on [4Fe-4S] cluster as a cofactor. Requires [2Fe-2S] cluster as cofactor.

The catalysed reaction is (4R,5S)-dethiobiotin + (sulfur carrier)-SH + 2 reduced [2Fe-2S]-[ferredoxin] + 2 S-adenosyl-L-methionine = (sulfur carrier)-H + biotin + 2 5'-deoxyadenosine + 2 L-methionine + 2 oxidized [2Fe-2S]-[ferredoxin]. The protein operates within cofactor biosynthesis; biotin biosynthesis; biotin from 7,8-diaminononanoate: step 2/2. Its function is as follows. Catalyzes the conversion of dethiobiotin (DTB) to biotin by the insertion of a sulfur atom into dethiobiotin via a radical-based mechanism. This is Biotin synthase from Mycobacterium avium (strain 104).